A 338-amino-acid polypeptide reads, in one-letter code: S-adenosylmethionine:tRNA ribosyltransferase-isomerase (338 aa).

It belongs to the QueA family. In terms of assembly, monomer.

It localises to the cytoplasm. The enzyme catalyses 7-aminomethyl-7-carbaguanosine(34) in tRNA + S-adenosyl-L-methionine = epoxyqueuosine(34) in tRNA + adenine + L-methionine + 2 H(+). It participates in tRNA modification; tRNA-queuosine biosynthesis. In terms of biological role, transfers and isomerizes the ribose moiety from AdoMet to the 7-aminomethyl group of 7-deazaguanine (preQ1-tRNA) to give epoxyqueuosine (oQ-tRNA). This Francisella tularensis subsp. novicida (strain U112) protein is S-adenosylmethionine:tRNA ribosyltransferase-isomerase.